The primary structure comprises 349 residues: RING-H2 finger protein ATL48 (349 aa).

Residues 1–85 form the HIG1 domain; the sequence is MSSVEPDMED…DNPWKKLLLS (85 aa). Ser2 carries the post-translational modification N-acetylserine. Transmembrane regions (helical) follow at residues 21–41, 55–75, and 121–141; these read PLVPLGALMTAGVLTAGLISF, ARVVVQGATVALMVGTGYYYG, and CLVISGLALIIVFLGVLYLIF. The RING-type; atypical zinc-finger motif lies at 207–249; sequence CAVCLNEFSDTDKLRLLPVCSHAFHLHCIDTWLLSNSTCPLCR.

It belongs to the RING-type zinc finger family. ATL subfamily.

The protein resides in the membrane. The enzyme catalyses S-ubiquitinyl-[E2 ubiquitin-conjugating enzyme]-L-cysteine + [acceptor protein]-L-lysine = [E2 ubiquitin-conjugating enzyme]-L-cysteine + N(6)-ubiquitinyl-[acceptor protein]-L-lysine.. It participates in protein modification; protein ubiquitination. This Arabidopsis thaliana (Mouse-ear cress) protein is RING-H2 finger protein ATL48 (ATL48).